We begin with the raw amino-acid sequence, 149 residues long: MAFKLVDKVLSFMGFEEEVVEEEEKRARDEIVEEQPWQRKKEKDRGAVLSLHAQRQVRVVVVEPRAFDEVQGIADNLKNRRPVIVNLEQAEPDLAKRIVDFISGATYALNGSLQKVGSGIFLFVPNNMDIASDLKDPQKEKGIFTWMRS.

It belongs to the SepF family. As to quaternary structure, homodimer. Interacts with FtsZ.

The protein resides in the cytoplasm. Cell division protein that is part of the divisome complex and is recruited early to the Z-ring. Probably stimulates Z-ring formation, perhaps through the cross-linking of FtsZ protofilaments. Its function overlaps with FtsA. This chain is Cell division protein SepF, found in Pelotomaculum thermopropionicum (strain DSM 13744 / JCM 10971 / SI).